The chain runs to 361 residues: UDP-3-O-acylglucosamine N-acyltransferase (361 aa).

The active-site Proton acceptor is histidine 253.

It belongs to the transferase hexapeptide repeat family. LpxD subfamily. In terms of assembly, homotrimer.

It carries out the reaction a UDP-3-O-[(3R)-3-hydroxyacyl]-alpha-D-glucosamine + a (3R)-hydroxyacyl-[ACP] = a UDP-2-N,3-O-bis[(3R)-3-hydroxyacyl]-alpha-D-glucosamine + holo-[ACP] + H(+). It functions in the pathway bacterial outer membrane biogenesis; LPS lipid A biosynthesis. Catalyzes the N-acylation of UDP-3-O-acylglucosamine using 3-hydroxyacyl-ACP as the acyl donor. Is involved in the biosynthesis of lipid A, a phosphorylated glycolipid that anchors the lipopolysaccharide to the outer membrane of the cell. In Burkholderia mallei (strain ATCC 23344), this protein is UDP-3-O-acylglucosamine N-acyltransferase.